We begin with the raw amino-acid sequence, 192 residues long: MILNRRIQVILPTLLILSFIIWIFHSVMVDKDWRLFMPEIKSLPDREGQGRKPIEMMSTKHDNNTNNLMVNAYWKLIHTVVSNYPNRPTLDERDILRHYLFSSAITMPCGEYSVELQKILDVHPPQTSSRKAATTWACKVHNQLNEKMNQPKTSCDGFNERYVIGSPTYRESEAENVPERVQVINEDHDYSG.

Residues 1–8 (MILNRRIQ) lie on the Cytoplasmic side of the membrane. The helical; Signal-anchor transmembrane segment at 9–29 (VILPTLLILSFIIWIFHSVMV) threads the bilayer. Over 30 to 192 (DKDWRLFMPE…VINEDHDYSG (163 aa)) the chain is Lumenal. The 102-residue stretch at 61 to 162 (HDNNTNNLMV…TSCDGFNERY (102 aa)) folds into the ERV/ALR sulfhydryl oxidase domain. Positions 74, 138, 141, 145, and 162 each coordinate FAD. Cys138 and Cys155 are disulfide-bonded.

FAD serves as cofactor.

Its subcellular location is the endoplasmic reticulum membrane. It is found in the cytoplasm. The protein localises to the nucleus. The enzyme catalyses 2 R'C(R)SH + O2 = R'C(R)S-S(R)CR' + H2O2. Functionally, FAD-dependent sulfhydryl oxidase that catalyzes disulfide bond formation in the endoplasmic reticulum lumen. This is FAD-linked sulfhydryl oxidase erv2 (erv2) from Schizosaccharomyces pombe (strain 972 / ATCC 24843) (Fission yeast).